The following is a 283-amino-acid chain: Thymidylate synthase (283 aa).

Residue R22 coordinates dUMP. C160 serves as the catalytic Nucleophile. Residues 180–183, N191, and 221–223 each bind dUMP; these read RSCD and HIY. Residue D183 coordinates (6R)-5,10-methylene-5,6,7,8-tetrahydrofolate. S282 is a binding site for (6R)-5,10-methylene-5,6,7,8-tetrahydrofolate.

Belongs to the thymidylate synthase family. Bacterial-type ThyA subfamily. As to quaternary structure, homodimer.

It is found in the cytoplasm. It carries out the reaction dUMP + (6R)-5,10-methylene-5,6,7,8-tetrahydrofolate = 7,8-dihydrofolate + dTMP. It participates in pyrimidine metabolism; dTTP biosynthesis. In terms of biological role, catalyzes the reductive methylation of 2'-deoxyuridine-5'-monophosphate (dUMP) to 2'-deoxythymidine-5'-monophosphate (dTMP) while utilizing 5,10-methylenetetrahydrofolate (mTHF) as the methyl donor and reductant in the reaction, yielding dihydrofolate (DHF) as a by-product. This enzymatic reaction provides an intracellular de novo source of dTMP, an essential precursor for DNA biosynthesis. The protein is Thymidylate synthase of Shewanella sediminis (strain HAW-EB3).